Consider the following 248-residue polypeptide: Anamorsin homolog (248 aa).

The N-terminal SAM-like domain stretch occupies residues 4-130 (FKGLQKSLYI…ETGSSARLSF (127 aa)). The segment at 131-161 (AKKTSSVNVWKISGDDEELIDEEELLDEEDK) is linker. [2Fe-2S] cluster is bound by residues Cys172, Cys181, Cys184, and Cys186. The interval 172-186 (CSTTGKRKACKNCSC) is fe-S binding site A. [4Fe-4S] cluster is bound by residues Cys209, Cys212, Cys220, and Cys223. 2 consecutive short sequence motifs (cx2C motif) follow at residues 209–212 (CGNC) and 220–223 (CSTC). The fe-S binding site B stretch occupies residues 209–223 (CGNCYLGDAFRCSTC).

It belongs to the anamorsin family. As to quaternary structure, monomer. [2Fe-2S] cluster is required as a cofactor. Requires [4Fe-4S] cluster as cofactor.

It localises to the cytoplasm. It is found in the mitochondrion intermembrane space. Its function is as follows. Component of the cytosolic iron-sulfur (Fe-S) protein assembly (CIA) machinery. Required for the maturation of extramitochondrial Fe-S proteins. Part of an electron transfer chain functioning in an early step of cytosolic Fe-S biogenesis, facilitating the de novo assembly of a [4Fe-4S] cluster on the cytosolic Fe-S scaffold complex. Electrons are transferred from NADPH via a FAD- and FMN-containing diflavin oxidoreductase. Together with the diflavin oxidoreductase, also required for the assembly of the diferric tyrosyl radical cofactor of ribonucleotide reductase (RNR), probably by providing electrons for reduction during radical cofactor maturation in the catalytic small subunit. This chain is Anamorsin homolog, found in Drosophila virilis (Fruit fly).